Consider the following 217-residue polypeptide: Ran-binding protein 1 homolog b (217 aa).

Disordered regions lie at residues 1–32 and 160–217; these read MASI…QVAP and ESEE…VPSA. At Ala2 the chain carries N-acetylalanine. Residues 14–26 are compositionally biased toward acidic residues; it reads DEEETGANEDEDT. Residues 29–164 form the RanBD1 domain; that stretch reads QVAPIVRLEE…FKEVAESEEE (136 aa). Residues 181-217 are compositionally biased toward basic and acidic residues; it reads LTVEEKESEKKPVEKAEENKKSEAVEEKKTEESVPSA.

In terms of assembly, interacts with the GTP-bound form of RAN1, RAN2 and RAN3.

The protein localises to the nucleus. Its subcellular location is the nuclear pore complex. The chain is Ran-binding protein 1 homolog b (RANBP1B) from Arabidopsis thaliana (Mouse-ear cress).